The primary structure comprises 210 residues: Na(+)-translocating NADH-quinone reductase subunit D (210 aa).

The next 6 helical transmembrane spans lie at Pro-14 to Val-34, Leu-42 to Ile-62, Ile-72 to Ala-92, Val-103 to Met-123, Phe-131 to Val-151, and Asn-178 to Ile-198.

Belongs to the NqrDE/RnfAE family. Composed of six subunits; NqrA, NqrB, NqrC, NqrD, NqrE and NqrF.

The protein resides in the cell inner membrane. The catalysed reaction is a ubiquinone + n Na(+)(in) + NADH + H(+) = a ubiquinol + n Na(+)(out) + NAD(+). Its function is as follows. NQR complex catalyzes the reduction of ubiquinone-1 to ubiquinol by two successive reactions, coupled with the transport of Na(+) ions from the cytoplasm to the periplasm. NqrA to NqrE are probably involved in the second step, the conversion of ubisemiquinone to ubiquinol. This Shewanella sp. (strain ANA-3) protein is Na(+)-translocating NADH-quinone reductase subunit D.